An 879-amino-acid polypeptide reads, in one-letter code: Alanine--tRNA ligase (879 aa).

Residues His567, His571, Cys669, and His673 each coordinate Zn(2+).

This sequence belongs to the class-II aminoacyl-tRNA synthetase family. The cofactor is Zn(2+).

It is found in the cytoplasm. The enzyme catalyses tRNA(Ala) + L-alanine + ATP = L-alanyl-tRNA(Ala) + AMP + diphosphate. In terms of biological role, catalyzes the attachment of alanine to tRNA(Ala) in a two-step reaction: alanine is first activated by ATP to form Ala-AMP and then transferred to the acceptor end of tRNA(Ala). Also edits incorrectly charged Ser-tRNA(Ala) and Gly-tRNA(Ala) via its editing domain. In Lactobacillus acidophilus (strain ATCC 700396 / NCK56 / N2 / NCFM), this protein is Alanine--tRNA ligase.